A 144-amino-acid chain; its full sequence is UPF0547 protein C16orf87 homolog (144 aa).

The disordered stretch occupies residues 33-112 (HAKQSQRLPP…EEKEKQEKEV (80 aa)). The segment covering 35 to 45 (KQSQRLPPTSE) has biased composition (polar residues). Positions 50–62 (PKRRRTERIKRER) are enriched in basic residues. Basic and acidic residues-rich tracts occupy residues 63 to 74 (IHTAVNRDLENR) and 99 to 112 (KKHE…EKEV). Residues 94–122 (KTATTKKHEEEKEKQEKEVDMYANLSDEK) are a coiled coil.

This sequence belongs to the UPF0547 family.

This chain is UPF0547 protein C16orf87 homolog, found in Xenopus laevis (African clawed frog).